Consider the following 283-residue polypeptide: Phosphatidylserine decarboxylase proenzyme (283 aa).

Active-site charge relay system; for autoendoproteolytic cleavage activity residues include Asp-88, His-145, and Ser-248. Ser-248 functions as the Schiff-base intermediate with substrate; via pyruvic acid; for decarboxylase activity in the catalytic mechanism. The residue at position 248 (Ser-248) is a Pyruvic acid (Ser); by autocatalysis.

Belongs to the phosphatidylserine decarboxylase family. PSD-B subfamily. Prokaryotic type I sub-subfamily. As to quaternary structure, heterodimer of a large membrane-associated beta subunit and a small pyruvoyl-containing alpha subunit. It depends on pyruvate as a cofactor. In terms of processing, is synthesized initially as an inactive proenzyme. Formation of the active enzyme involves a self-maturation process in which the active site pyruvoyl group is generated from an internal serine residue via an autocatalytic post-translational modification. Two non-identical subunits are generated from the proenzyme in this reaction, and the pyruvate is formed at the N-terminus of the alpha chain, which is derived from the carboxyl end of the proenzyme. The autoendoproteolytic cleavage occurs by a canonical serine protease mechanism, in which the side chain hydroxyl group of the serine supplies its oxygen atom to form the C-terminus of the beta chain, while the remainder of the serine residue undergoes an oxidative deamination to produce ammonia and the pyruvoyl prosthetic group on the alpha chain. During this reaction, the Ser that is part of the protease active site of the proenzyme becomes the pyruvoyl prosthetic group, which constitutes an essential element of the active site of the mature decarboxylase.

Its subcellular location is the cell membrane. It carries out the reaction a 1,2-diacyl-sn-glycero-3-phospho-L-serine + H(+) = a 1,2-diacyl-sn-glycero-3-phosphoethanolamine + CO2. Its pathway is phospholipid metabolism; phosphatidylethanolamine biosynthesis; phosphatidylethanolamine from CDP-diacylglycerol: step 2/2. In terms of biological role, catalyzes the formation of phosphatidylethanolamine (PtdEtn) from phosphatidylserine (PtdSer). In Variovorax paradoxus (strain S110), this protein is Phosphatidylserine decarboxylase proenzyme.